Consider the following 95-residue polypeptide: Ferredoxin-like protein FixX (95 aa).

The protein belongs to the bacterial-type ferredoxin family. FixX subfamily.

In terms of biological role, could be part of an electron transfer system required for anaerobic carnitine reduction. Could be a 3Fe-4S cluster-containing protein. This Shigella flexneri protein is Ferredoxin-like protein FixX (fixX).